A 668-amino-acid polypeptide reads, in one-letter code: Fe(2+) transporter FeoB (668 aa).

The FeoB-type G domain occupies 3–165 (SYEIALIGNP…KKAISIAVKD (163 aa)). Residue 10 to 17 (GNPNVGKS) participates in GTP binding. Mg(2+)-binding residues include N21, A22, T24, and G25. GTP-binding positions include 35-39 (GVTVE), 56-59 (DLPG), 116-119 (NKMD), and 145-147 (SAA). 8 helical membrane passes run 344-364 (VGAV…ISFL), 386-406 (LPGK…PAIM), 418-438 (ILTI…IYAL), 450-470 (VVIL…AFLF), 515-535 (IIVF…SGYL), 574-594 (ALVF…MLYG), 613-633 (AYAF…LAVI), and 643-663 (LFAV…ISVI).

It belongs to the TRAFAC class TrmE-Era-EngA-EngB-Septin-like GTPase superfamily. FeoB GTPase (TC 9.A.8) family. The crystallized N-terminal domain is a homodimer.

It is found in the cell membrane. Probable transporter of a GTP-driven Fe(2+) uptake system, might be able to transport Fe(2+) into or out of the cell. The polypeptide is Fe(2+) transporter FeoB (Methanocaldococcus jannaschii (strain ATCC 43067 / DSM 2661 / JAL-1 / JCM 10045 / NBRC 100440) (Methanococcus jannaschii)).